The following is a 68-amino-acid chain: Conotoxin Am6.8 (68 aa).

An N-terminal signal peptide occupies residues 1–24 (MIRMGFFLTLTVAVLLTSLTCSEA). Positions 25-45 (VPTDKREMERLFDRILLKDQR) are excised as a propeptide. The residue at position 46 (Gln-46) is a Pyrrolidone carboxylic acid. 3 cysteine pairs are disulfide-bonded: Cys-47/Cys-55, Cys-50/Cys-60, and Cys-54/Cys-65.

This sequence belongs to the conotoxin U superfamily. Expressed by the venom duct.

Its subcellular location is the secreted. In terms of biological role, probable toxin. This chain is Conotoxin Am6.8, found in Conus amadis (Amadis cone).